The chain runs to 554 residues: Perforin-1 (554 aa).

The signal sequence occupies residues 1 to 20 (MAAYLFLLGLFLLLPRPVPA). 3 cysteine pairs are disulfide-bonded: cysteine 22–cysteine 75, cysteine 30–cysteine 72, and cysteine 101–cysteine 175. The region spanning 26-374 (TRSECKQNHK…HYVMSRARWR (349 aa)) is the MACPF domain. The chain crosses the membrane as a beta stranded span at residues 128-148 (WRAGLDVNPKPEANVHVSVAG). An N-linked (GlcNAc...) asparagine glycan is attached at asparagine 204. Disulfide bonds link cysteine 241-cysteine 407, cysteine 376-cysteine 392, cysteine 380-cysteine 394, and cysteine 396-cysteine 406. The beta stranded transmembrane segment at 256–278 (CLSVEAQVSIGAQASVSSEYKAC) threads the bilayer. An EGF-like domain is found at 375 to 407 (DCNRPCRAGQHKSSRDSCQCVCQDSNVTNQDCC). The C2 domain maps to 395–513 (VCQDSNVTNQ…FHEVNCPLNH (119 aa)). An N-linked (GlcNAc...) asparagine glycan is attached at asparagine 400. Positions 428, 429, 432, 435, 454, 483, 484, 485, 488, 489, 490, and 491 each coordinate Ca(2+). 2 cysteine pairs are disulfide-bonded: cysteine 496-cysteine 509 and cysteine 524-cysteine 533. N-linked (GlcNAc...) asparagine glycosylation occurs at asparagine 548.

This sequence belongs to the complement C6/C7/C8/C9 family. In terms of assembly, monomer, as soluble protein. Homooligomer; homooligomerizes to form a pore-forming ring. Ca(2+) serves as cofactor. Post-translationally, N-glycosylated. As to expression, detected in large granular lymphocytes and lymphokine-activated killer cells.

Its subcellular location is the cytolytic granule. It is found in the secreted. The protein resides in the cell membrane. It localises to the endosome lumen. Functionally, pore-forming protein that plays a key role in granzyme-mediated programmed cell death, and in defense against virus-infected or neoplastic cells. Can insert into the membrane of target cells in its calcium-bound form, oligomerize and form large pores. Promotes cytolysis and apoptosis of target cells by mediating the passage and uptake of cytotoxic granzymes. Facilitates the delivery of cationic cargo protein, while anionic or neural proteins are not delivered efficiently. Perforin pores allow the release of mature caspase-7 (CASP7) into the extracellular milieu. The protein is Perforin-1 (Prf1) of Rattus norvegicus (Rat).